The following is a 485-amino-acid chain: Protein disulfide-isomerase 1 (485 aa).

The N-terminal stretch at 1–20 (MSLSVSFIFLLVASIGAVVA) is a signal peptide. Thioredoxin domains are found at residues 21 to 130 (DSEN…KKSG) and 342 to 470 (YLEG…KYAG). Intrachain disulfides connect cysteine 52-cysteine 55 and cysteine 393-cysteine 396. Residues cysteine 393 and cysteine 396 each act as nucleophile in the active site. Residues 482–485 (HEEL) carry the Prevents secretion from ER motif.

It belongs to the protein disulfide isomerase family.

The protein resides in the endoplasmic reticulum lumen. The catalysed reaction is Catalyzes the rearrangement of -S-S- bonds in proteins.. This is Protein disulfide-isomerase 1 (pdi-1) from Caenorhabditis elegans.